Reading from the N-terminus, the 161-residue chain is UPF0225 protein GSU1048 (161 aa).

Belongs to the UPF0225 family.

The polypeptide is UPF0225 protein GSU1048 (Geobacter sulfurreducens (strain ATCC 51573 / DSM 12127 / PCA)).